The primary structure comprises 755 residues: E3 ubiquitin-protein ligase TRIM56 (755 aa).

The RING-type zinc-finger motif lies at 21–60 (CKICLEQLRAPKTLPCLHTYCQDCLAQLADGGRVRCPECR). 2 B box-type zinc fingers span residues 98–149 (KPAC…VVDL) and 164–205 (RQAA…CLPL). 4 residues coordinate Zn(2+): cysteine 169, histidine 172, cysteine 192, and histidine 197. Positions 216–314 (LEGLLAGVDN…AAAFARRVLS (99 aa)) form a coiled coil. The interval 371 to 484 (EEQQPQKDGG…SPALGPNLDG (114 aa)) is disordered. Residues 392 to 404 (SQSRREDEPKTER) show a composition bias toward basic and acidic residues. A phosphothreonine mark is found at threonine 418 and threonine 442. Over residues 419 to 447 (PKEEKAQTTREEGAQTLEEDRAQTPHEDG) the composition is skewed to basic and acidic residues. A compositionally biased stretch (basic residues) spans 453–469 (RGGRPNKKKKFKGRLKS). Phosphoserine is present on serine 475.

It belongs to the TRIM/RBCC family. Homooligomer. Interacts with STING1. Interacts with TICAM1. Post-translationally, (Microbial infection) Preferentially ubiquitinated with 'Lys-48' and 'Lys-11'-linked ubiquitin chains by Salmonella effector SopA leading to proteasomal targeting and degradation. Autoubiquitinated. Widely expressed (at protein level).

The protein resides in the cytoplasm. The enzyme catalyses S-ubiquitinyl-[E2 ubiquitin-conjugating enzyme]-L-cysteine + [acceptor protein]-L-lysine = [E2 ubiquitin-conjugating enzyme]-L-cysteine + N(6)-ubiquitinyl-[acceptor protein]-L-lysine.. The protein operates within protein modification; protein ubiquitination. In terms of biological role, E3 ubiquitin-protein ligase that plays a key role in innate antiviral immunity by mediating ubiquitination of CGAS and STING1. In response to pathogen- and host-derived double-stranded DNA (dsDNA), targets STING1 to 'Lys-63'-linked ubiquitination, thereby promoting its homodimerization, a step required for the production of type I interferon IFN-beta. Also mediate monoubiquitination of CGAS, thereby promoting CGAS oligomerization and subsequent activation. Promotes also TNFalpha-induced NF-kappa-B signaling by mediating 'Lys-63'-linked ubiquitination TAK1, leading to enhanced interaction between TAK1 and CHUK/IKKalpha. Independently of its E3 ubiquitin ligase activity, positive regulator of TLR3 signaling. Potentiates extracellular double stranded RNA (dsRNA)-induced expression of IFNB1 and interferon-stimulated genes ISG15, IFIT1/ISG56, CXCL10, OASL and CCL5/RANTES. Promotes establishment of an antiviral state by TLR3 ligand and TLR3-mediated chemokine induction following infection by hepatitis C virus. Acts as a restriction factor of Zika virus through direct interaction with the viral RNA via its C-terminal region. This chain is E3 ubiquitin-protein ligase TRIM56, found in Homo sapiens (Human).